We begin with the raw amino-acid sequence, 157 residues long: Probable cyclic pyranopterin monophosphate synthase (157 aa).

Substrate-binding positions include methionine 75–histidine 77 and methionine 111–glutamate 112. Aspartate 126 is a catalytic residue.

This sequence belongs to the MoaC family. In terms of assembly, homohexamer; trimer of dimers.

The catalysed reaction is (8S)-3',8-cyclo-7,8-dihydroguanosine 5'-triphosphate = cyclic pyranopterin phosphate + diphosphate. It participates in cofactor biosynthesis; molybdopterin biosynthesis. Its function is as follows. Catalyzes the conversion of (8S)-3',8-cyclo-7,8-dihydroguanosine 5'-triphosphate to cyclic pyranopterin monophosphate (cPMP). The chain is Probable cyclic pyranopterin monophosphate synthase from Methanosarcina mazei (strain ATCC BAA-159 / DSM 3647 / Goe1 / Go1 / JCM 11833 / OCM 88) (Methanosarcina frisia).